The primary structure comprises 363 residues: 3-isopropylmalate dehydrogenase (363 aa).

Gly79 to Glu92 serves as a coordination point for NAD(+). Substrate is bound by residues Arg100, Arg110, Arg139, and Asp228. Positions 228, 252, and 256 each coordinate Mg(2+). Residue Gly286–Asn298 participates in NAD(+) binding.

Belongs to the isocitrate and isopropylmalate dehydrogenases family. LeuB type 1 subfamily. As to quaternary structure, homodimer. The cofactor is Mg(2+). Mn(2+) serves as cofactor.

The protein localises to the cytoplasm. It catalyses the reaction (2R,3S)-3-isopropylmalate + NAD(+) = 4-methyl-2-oxopentanoate + CO2 + NADH. The protein operates within amino-acid biosynthesis; L-leucine biosynthesis; L-leucine from 3-methyl-2-oxobutanoate: step 3/4. In terms of biological role, catalyzes the oxidation of 3-carboxy-2-hydroxy-4-methylpentanoate (3-isopropylmalate) to 3-carboxy-4-methyl-2-oxopentanoate. The product decarboxylates to 4-methyl-2 oxopentanoate. This is 3-isopropylmalate dehydrogenase from Aliivibrio fischeri (strain ATCC 700601 / ES114) (Vibrio fischeri).